We begin with the raw amino-acid sequence, 192 residues long: Cysteine and glycine-rich protein 1 (192 aa).

One can recognise an LIM zinc-binding 1 domain in the interval 10–61 (CGVCQKAVYFAEEVQCEGSSFHKSCFLCMVCKKNLDSTTVAVHGDEIYCKSC). The Nuclear localization signal motif lies at 64–69 (KKYGPK). In terms of domain architecture, LIM zinc-binding 2 spans 118–169 (CPRCGQAVYAAEKVIGAGKSWHKSCFRCAKCGKSLESTTLADKDGEIYCKGC).

As to quaternary structure, probable monomer. Interacts with ZYX. As to expression, most prominent in tissues that are enriched in smooth muscle cells, such as gizzard, stomach, and intestine. Lower level in the heart, no expression in liver, skeletal muscle, or brain.

It is found in the nucleus. The protein localises to the cytoplasm. The protein resides in the cytoskeleton. Its function is as follows. Heat stable protein, that interacts with zyxin/ZYX. May be a component of a signal transduction pathway that mediates adhesion-stimulated changes in gene expression. This is Cysteine and glycine-rich protein 1 (CSRP1) from Gallus gallus (Chicken).